Here is a 529-residue protein sequence, read N- to C-terminus: Hyaluronidase PH-20 (529 aa).

An N-terminal signal peptide occupies residues 1–35; that stretch reads MGAFTFKHSFFGSFVECSGVLQTVFIFLLIPCCLA. 2 disulfides stabilise this stretch: C59–C351 and C223–C237. An N-linked (GlcNAc...) asparagine glycan is attached at N81. The active-site Proton donor is the E147. Residues N165 and N179 are each glycosylated (N-linked (GlcNAc...) asparagine). Residues N253 and N368 are each glycosylated (N-linked (GlcNAc...) asparagine). 3 disulfide bridges follow: C376/C387, C381/C435, and C437/C464. A glycan (N-linked (GlcNAc...) asparagine) is linked at N401. Residues 478 to 502 form a disordered region; that stretch reads DEPPITDDTSQNQDSISDITSSAPP. The segment covering 487–502 has biased composition (polar residues); that stretch reads SQNQDSISDITSSAPP. S492 is lipidated: GPI-anchor amidated serine. Residues 493–529 constitute a propeptide, removed in mature form; the sequence is ISDITSSAPPSSHILPKDLSWCLFLLSIFSQHWKYLL.

This sequence belongs to the glycosyl hydrolase 56 family. In terms of processing, endoproteolysis (toward the C-terminus producing two disulfide-linked fragments) could activate PH-20. Testis.

The protein resides in the cell membrane. The enzyme catalyses Random hydrolysis of (1-&gt;4)-linkages between N-acetyl-beta-D-glucosamine and D-glucuronate residues in hyaluronate.. Involved in sperm-egg adhesion. Upon fertilization sperm must first penetrate a layer of cumulus cells that surrounds the egg before reaching the zona pellucida. The cumulus cells are embedded in a matrix containing hyaluronic acid which is formed prior to ovulation. This protein aids in penetrating the layer of cumulus cells by digesting hyaluronic acid. The protein is Hyaluronidase PH-20 (SPAM1) of Cavia porcellus (Guinea pig).